The chain runs to 252 residues: Ubiquinone biosynthesis protein COQ4 homolog 2, mitochondrial (252 aa).

His-130, Asp-131, His-134, and Glu-146 together coordinate Zn(2+).

The protein belongs to the COQ4 family. As to quaternary structure, component of a multi-subunit COQ enzyme complex. It depends on Zn(2+) as a cofactor.

Its subcellular location is the mitochondrion inner membrane. The catalysed reaction is a 4-hydroxy-3-methoxy-5-(all-trans-polyprenyl)benzoate + H(+) = a 2-methoxy-6-(all-trans-polyprenyl)phenol + CO2. It functions in the pathway cofactor biosynthesis; ubiquinone biosynthesis. In terms of biological role, lyase that catalyzes the C1-decarboxylation of 4-hydroxy-3-methoxy-5-(all-trans-polyprenyl)benzoic acid into 2-methoxy-6-(all-trans-polyprenyl)phenol during ubiquinone biosynthesis. The protein is Ubiquinone biosynthesis protein COQ4 homolog 2, mitochondrial of Trypanosoma cruzi (strain CL Brener).